Here is a 107-residue protein sequence, read N- to C-terminus: Envelope small membrane protein (107 aa).

The Virion surface portion of the chain corresponds to M1–E11. Residues N12–G32 form a helical membrane-spanning segment. Topologically, residues R33–S107 are intravirion.

It belongs to the gammacoronaviruses E protein family. Homooligomer. Interacts with the M membrane protein in the budding compartment of the host cell, which is located between endoplasmic reticulum and the Golgi complex. The cytoplasmic tails of both proteins are important for this function. Interacts with Nucleoprotein.

It is found in the host Golgi apparatus membrane. Its function is as follows. Plays a central role in virus morphogenesis and assembly. Acts as a viroporin and self-assembles in host membranes forming pentameric protein-lipid pores that allow ion transport. Also plays a role in the induction of apoptosis. This is Envelope small membrane protein from Gallus gallus (Chicken).